The following is a 230-amino-acid chain: Fibrillarin-like rRNA/tRNA 2'-O-methyltransferase (230 aa).

S-adenosyl-L-methionine is bound by residues 87 to 88 (TT), 105 to 106 (EF), 130 to 131 (DA), and 150 to 153 (DVAQ).

Belongs to the methyltransferase superfamily. Fibrillarin family. Interacts with nop5. Component of box C/D small ribonucleoprotein (sRNP) particles that contain rpl7ae, FlpA and nop5, plus a guide RNA.

Its function is as follows. Involved in pre-rRNA and tRNA processing. Utilizes the methyl donor S-adenosyl-L-methionine to catalyze the site-specific 2'-hydroxyl methylation of ribose moieties in rRNA and tRNA. Site specificity is provided by a guide RNA that base pairs with the substrate. Methylation occurs at a characteristic distance from the sequence involved in base pairing with the guide RNA. This Methanococcus maripaludis (strain C5 / ATCC BAA-1333) protein is Fibrillarin-like rRNA/tRNA 2'-O-methyltransferase.